The chain runs to 346 residues: Sensor protein kinase GraS (346 aa).

The next 2 helical transmembrane spans lie at 15 to 35 (MNWIFWILFLNLLMLGISLID) and 43 to 63 (LFYIVSLNLSLTMIFLILTYF). The region spanning 126–332 (EFVHDIKTPV…TVRLIFPLQN (207 aa)) is the Histidine kinase domain.

In terms of assembly, interacts with GraX.

The protein localises to the cell membrane. The catalysed reaction is ATP + protein L-histidine = ADP + protein N-phospho-L-histidine.. Member of the two-component regulatory system GraR/GraS involved in resistance against cationic antimicrobial peptides (CAMPs). Functions as a sensor protein kinase which phosphorylates GraR through the auxiliary protein GraX. In turn, GraR up-regulates many genes such as adhesins, exoproteins, transporters, toxins, and proteins involved in cell wall synthesis. Down-regulates the expression of many genes involved in RNA and amino acid synthesis or glycolysis. The sequence is that of Sensor protein kinase GraS (graS) from Staphylococcus aureus (strain MSSA476).